We begin with the raw amino-acid sequence, 198 residues long: Pyridoxine/pyridoxamine 5'-phosphate oxidase 2 (198 aa).

FMN-binding positions include Arg-42, 59–60, Lys-66, and 121–122; these read NT and RS.

The protein belongs to the pyridoxamine 5'-phosphate oxidase family. In terms of assembly, homodimer. FMN is required as a cofactor.

It catalyses the reaction pyridoxamine 5'-phosphate + O2 + H2O = pyridoxal 5'-phosphate + H2O2 + NH4(+). The catalysed reaction is pyridoxine 5'-phosphate + O2 = pyridoxal 5'-phosphate + H2O2. The protein operates within cofactor metabolism; pyridoxal 5'-phosphate salvage; pyridoxal 5'-phosphate from pyridoxamine 5'-phosphate: step 1/1. It participates in cofactor metabolism; pyridoxal 5'-phosphate salvage; pyridoxal 5'-phosphate from pyridoxine 5'-phosphate: step 1/1. Functionally, catalyzes the oxidation of either pyridoxine 5'-phosphate (PNP) or pyridoxamine 5'-phosphate (PMP) into pyridoxal 5'-phosphate (PLP). Has an in vitro catalytic efficiency for PNP approximately 300-fold lower than that of PPOX1. The chain is Pyridoxine/pyridoxamine 5'-phosphate oxidase 2 (PPOX2) from Arabidopsis thaliana (Mouse-ear cress).